The primary structure comprises 1119 residues: Transient receptor potential cation channel subfamily A member 1 (1119 aa).

At 1-718 (MKRSLRKMWR…MKWLAYGFRA (718 aa)) the chain is on the cytoplasmic side. ANK repeat units follow at residues 62 to 92 (MDTFFLHYAAAEGQIELMEKITRDSSLEVLH), 97 to 126 (YGNTPLHCAVEKNQIESVKFLLSRGANPNL), 130 to 160 (NMMAPLHIAVQGMNNEVMKVLLEHRTIDVNL), 164 to 193 (NGNTAVIIACTTNNSEALQILLKKGAKPCK), 197 to 226 (WGCFPIHQAAFSGSKECMEIILRFGEEHGY), 238 to 267 (GKATPLHLAVQNGDLEMIKMCLDNGAQIDP), 271 to 301 (GRCTAIHFAATQGATEIVKLMISSYSGSVDI), 308 to 337 (CHETMLHRASLFDHHELADYLISVGADINK), 341 to 370 (EGRSPLILATASASWNIVNLLLSKGAQVDI), 374 to 403 (FGRNFLHLTVQQPYGLKNLRPEFMQMQQIK), 412 to 441 (DGCTPLHYACRQGGPGSVNNLLGFNVSIHS), 445 to 474 (DKKSPLHFAASYGRINTCQRLLQDISDTRL), 481 to 510 (HGMTPLHLAAKNGHDKVVQLLLKKGALFLS), 513 to 542 (NGWTALHHASMGGYTQTMKVILDTNLKCTD), 547 to 576 (DGNTALHFAAREGHAKAVALLLSHNADIVL), and 579 to 609 (QQASFLHLALHNKRKEVVLTIIRSKRWDECL). 5 disulfides stabilise this stretch: Cys192–Cys665, Cys462–Cys665, Cys608–Cys621, Cys621–Cys665, and Cys633–Cys856. Pro394 is modified (4-hydroxyproline; by EGLN1; transient; in normoxia and hyperoxia). The (E)-cinnamaldehyde site is built by Cys414 and Cys421. Cys621 serves as a coordination point for (E)-cinnamaldehyde. Residue Cys633 is modified to Cysteine sulfenic acid (-SOH); transient; in hyperoxia. (E)-cinnamaldehyde contacts are provided by Cys641, Cys665, and Lys710. Residues 719 to 739 (HMMNLGSYCLGLIPMTILVVN) form a helical membrane-spanning segment. Residues 740–767 (IKPGMAFNSTGIINETSDHSEILDTTNS) lie on the Extracellular side of the membrane. N-linked (GlcNAc...) asparagine glycosylation is found at Asn747 and Asn753. Residues 768-793 (YLIKTCMILVFLSSIFGYCKEAGQIF) form a helical membrane-spanning segment. Residues Glu788 and Gln791 each contribute to the Ca(2+) site. Over 794–798 (QQKRN) the chain is Cytoplasmic. A helical membrane pass occupies residues 799–823 (YFMDISNVLEWIIYTTGIIFVLPLF). Ca(2+)-binding residues include Asn805 and Glu808. Topologically, residues 824–829 (VEIPAH) are extracellular. A helical membrane pass occupies residues 830–850 (LQWQCGAIAVYFYWMNFLLYL). Residues 851 to 862 (QRFENCGIFIVM) are Cytoplasmic-facing. Cys856 is modified (cysteine sulfenic acid (-SOH); transient; in hyperoxia). The helical transmembrane segment at 863-892 (LEVILKTLLRSTVVFIFLLLAFGLSFYILL) threads the bilayer. The Extracellular portion of the chain corresponds to 893 to 901 (NLQDPFSSP). An intramembrane region (pore-forming) is located at residues 902 to 922 (LLSIIQTFSMMLGDINYRESF). Residues 923–933 (LEPYLRNELAH) lie on the Extracellular side of the membrane. Residues 934-960 (PVLSFAQLVSFTIFVPIVLMNLLIGLA) traverse the membrane as a helical segment. Over 961–1119 (VGDIAEVQKH…VKAKTHHLEP (159 aa)) the chain is Cytoplasmic. A coiled-coil region spans residues 1042 to 1071 (MEILKQKYRLKDLTFLLEKQHELIKLIIQK). Position 1046-1052 (1046-1052 (KQKYRLK)) interacts with a 1,2-diacyl-sn-glycero-3-phospho-(1D-myo-inositol).

Belongs to the transient receptor (TC 1.A.4) family. In terms of assembly, homotetramer. Interacts with TMEM100. Interacts with EGLN1. Interacts with the scorpion wasabi receptor toxin at the same site that electrophiles but in a non-covalent manner. TRPA1 activation by electrophiles occurs though covalent modification of specific cysteine residues in the N-terminal cytoplasmic domain. In terms of processing, hydroxylation is required for TRPA1 activity inhibition in normoxia. In hypoxia, the decrease in oxygen concentration diminishes the activity of the hydroxylase EGLN1, thus relieving TRPA1 from inhibition and ultimately leading to channel activation. Post-translationally, oxidation of Cys-633 and Cys-856 in hyperoxia may override the hydroxylase EGLN1-mediated inhibition, causing TRPA1 activation.

The protein localises to the cell membrane. It catalyses the reaction Ca(2+)(in) = Ca(2+)(out). The catalysed reaction is Mg(2+)(in) = Mg(2+)(out). The enzyme catalyses Na(+)(in) = Na(+)(out). It carries out the reaction K(+)(in) = K(+)(out). It catalyses the reaction Zn(2+)(in) = Zn(2+)(out). Electrophilic ligands activate the channel by covalent modification of intracellular cysteines; Cys-621 plays a key role in covalent binding of electrophiles. Extracellular Ca(2+) both potentiates and inactivates TRPA1; a rapid potentiation follows by slow desensitization. Activated by increase in intracellular Ca(2+) concentration. Inhibited by the potent blocker of TRPV channels ruthenium red, A-967079, AP-18, HC-030031, and aryl sulfonamide derivative (S)-N-(4-chlorobenzyl)-1-((4-fluorophenyl)sulfonyl)pyrrolidine-2-carboxamide (ASD). Activated by benzyl isothiocyanate (BITC), iodoacetamide, sulfhydryl reactive agent MTSEA, N-methyl maleimide (NMM), N-ethylmaleimide (NEM), and 2-aminoethyldiphenylborinate (2-APB). Also activated by hyperoxia. Acivated by intracellular Zn(2+). TRPA1 activation may critically depend on the presence of small intracellular compounds such as polyphosphates. Functionally, ligand-activated Ca(2+)-permeable, nonselective cation channel involved in pain detection and possibly also in cold perception, oxygen concentration perception, cough, itch, and inner ear function. Has a relatively high Ca(2+) selectivity, with a preference for divalent over monovalent cations (Ca(2+) &gt; Ba(2+) &gt; Mg(2+) &gt; NH4(+) &gt; Li(+) &gt; K(+)), the influx of cation into the cytoplasm leads to membrane depolarization. Has a central role in the pain response to endogenous inflammatory mediators, such as bradykinin and to a diverse array of irritants. Activated by a large variety of structurally unrelated electrophilic and non-electrophilic chemical compounds, such as allylthiocyanate (AITC) from mustard oil or wasabi, cinnamaldehyde, diallyl disulfide (DADS) from garlic, and acrolein, an environmental irritant. Electrophilic ligands activate TRPA1 by interacting with critical N-terminal Cys residues in a covalent manner. Non-electrophile agonists bind at distinct sites in the transmembrane domain to promote channel activation. Also acts as an ionotropic cannabinoid receptor by being activated by delta(9)-tetrahydrocannabinol (THC), the psychoactive component of marijuana. May be a component for the mechanosensitive transduction channel of hair cells in inner ear, thereby participating in the perception of sounds. The chain is Transient receptor potential cation channel subfamily A member 1 from Homo sapiens (Human).